A 350-amino-acid chain; its full sequence is Quercetin 2,3-dioxygenase (350 aa).

The interval 1-145 (DTSSLIVEDA…FYYLGTNATD (145 aa)) is cupin 1. Cu cation is bound by residues His66, His68, and Glu73. His66 serves as a coordination point for substrate. Glu73 is a binding site for substrate. N-linked (GlcNAc...) asparagine glycosylation is found at Asn90 and Asn109. His112 contacts Cu cation. Asn142 is a glycosylation site (N-linked (GlcNAc...) asparagine). The linker stretch occupies residues 146–205 (TTHTPYIPSSSDSSSTTGPDSSTISTLQSFDVYAELSFTPRTDTVNGTAPANTVWHTGAN). The tract at residues 148–167 (HTPYIPSSSDSSSTTGPDSS) is disordered. Residues 152-167 (IPSSSDSSSTTGPDSS) are compositionally biased toward low complexity. N-linked (GlcNAc...) asparagine glycosylation is found at Asn191 and Asn248. The cupin 2 stretch occupies residues 206–350 (ALASTAGDPY…WSSVSFPADW (145 aa)).

In terms of assembly, homodimer. The cofactor is Cu cation. In terms of processing, the N-linked glycan at Asn-191 consists of Man(5)-GlcNAc(2).

It carries out the reaction quercetin + O2 = 2-(3,4-dihydroxybenzoyloxy)-4,6-dihydroxybenzoate + CO. It participates in flavonoid metabolism; quercetin degradation. With respect to regulation, inhibited by diethyldithiocarbamate and kojic acid. Its function is as follows. Performs the first step in the degradation of the flavonoid quercetin by a dioxygenase reaction. The enzyme catalyzes the cleavage of the O-heteroaromatic ring of the flavonol quercetin yielding the depside 2-protocatechuoyl-phloroglucinol carboxylic acid and carbon monoxide. This involves the remarkable dioxygenolytic cleavage of two carbon-carbon bonds. The protein is Quercetin 2,3-dioxygenase of Aspergillus japonicus.